Here is a 170-residue protein sequence, read N- to C-terminus: NAD(P)H-quinone oxidoreductase subunit I, chloroplastic (170 aa).

2 4Fe-4S ferredoxin-type domains span residues 55-84 (GRIH…VDWK) and 95-124 (LNYS…MTEE). Cys64, Cys67, Cys70, Cys74, Cys104, Cys107, Cys110, and Cys114 together coordinate [4Fe-4S] cluster.

It belongs to the complex I 23 kDa subunit family. As to quaternary structure, NDH is composed of at least 16 different subunits, 5 of which are encoded in the nucleus. It depends on [4Fe-4S] cluster as a cofactor.

Its subcellular location is the plastid. It is found in the chloroplast thylakoid membrane. The catalysed reaction is a plastoquinone + NADH + (n+1) H(+)(in) = a plastoquinol + NAD(+) + n H(+)(out). It carries out the reaction a plastoquinone + NADPH + (n+1) H(+)(in) = a plastoquinol + NADP(+) + n H(+)(out). NDH shuttles electrons from NAD(P)H:plastoquinone, via FMN and iron-sulfur (Fe-S) centers, to quinones in the photosynthetic chain and possibly in a chloroplast respiratory chain. The immediate electron acceptor for the enzyme in this species is believed to be plastoquinone. Couples the redox reaction to proton translocation, and thus conserves the redox energy in a proton gradient. The chain is NAD(P)H-quinone oxidoreductase subunit I, chloroplastic from Spinacia oleracea (Spinach).